Here is a 26-residue protein sequence, read N- to C-terminus: uncharacterized protein (26 aa).

It is found in the plastid. Its subcellular location is the chloroplast. This is an uncharacterized protein from Trieres chinensis (Marine centric diatom).